The primary structure comprises 307 residues: Porphobilinogen deaminase (307 aa).

At Cys-241 the chain carries S-(dipyrrolylmethanemethyl)cysteine.

This sequence belongs to the HMBS family. Monomer. Dipyrromethane is required as a cofactor.

The enzyme catalyses 4 porphobilinogen + H2O = hydroxymethylbilane + 4 NH4(+). It functions in the pathway porphyrin-containing compound metabolism; protoporphyrin-IX biosynthesis; coproporphyrinogen-III from 5-aminolevulinate: step 2/4. Functionally, tetrapolymerization of the monopyrrole PBG into the hydroxymethylbilane pre-uroporphyrinogen in several discrete steps. This is Porphobilinogen deaminase from Coxiella burnetii (strain RSA 331 / Henzerling II).